The sequence spans 2294 residues: Protein Ycf2 (2294 aa).

An ATP-binding site is contributed by 1648–1655 (GSIGTGRS).

The protein belongs to the Ycf2 family.

The protein localises to the plastid. The protein resides in the chloroplast stroma. Functionally, probable ATPase of unknown function. Its presence in a non-photosynthetic plant (Epifagus virginiana) and experiments in tobacco indicate that it has an essential function which is probably not related to photosynthesis. This is Protein Ycf2 from Arabidopsis thaliana (Mouse-ear cress).